We begin with the raw amino-acid sequence, 387 residues long: Phosphoglycerate kinase (387 aa).

Substrate contacts are provided by residues 21-23, Arg36, 59-62, Arg113, and Arg146; these read DLN and HLGR. ATP-binding positions include Lys197, Glu314, and 340–343; that span reads GGDT.

Belongs to the phosphoglycerate kinase family. Monomer.

It is found in the cytoplasm. The catalysed reaction is (2R)-3-phosphoglycerate + ATP = (2R)-3-phospho-glyceroyl phosphate + ADP. The protein operates within carbohydrate degradation; glycolysis; pyruvate from D-glyceraldehyde 3-phosphate: step 2/5. The protein is Phosphoglycerate kinase of Pseudomonas entomophila (strain L48).